The sequence spans 505 residues: ATP synthase subunit alpha (505 aa).

169–176 (GDRQIGKT) is an ATP binding site.

The protein belongs to the ATPase alpha/beta chains family. In terms of assembly, F-type ATPases have 2 components, CF(1) - the catalytic core - and CF(0) - the membrane proton channel. CF(1) has five subunits: alpha(3), beta(3), gamma(1), delta(1), epsilon(1). CF(0) has three main subunits: a(1), b(2) and c(9-12). The alpha and beta chains form an alternating ring which encloses part of the gamma chain. CF(1) is attached to CF(0) by a central stalk formed by the gamma and epsilon chains, while a peripheral stalk is formed by the delta and b chains.

Its subcellular location is the cell inner membrane. It carries out the reaction ATP + H2O + 4 H(+)(in) = ADP + phosphate + 5 H(+)(out). In terms of biological role, produces ATP from ADP in the presence of a proton gradient across the membrane. The alpha chain is a regulatory subunit. In Desulfosudis oleivorans (strain DSM 6200 / JCM 39069 / Hxd3) (Desulfococcus oleovorans), this protein is ATP synthase subunit alpha.